We begin with the raw amino-acid sequence, 607 residues long: Vacuolar fusion protein MON1 homolog (607 aa).

Over residues 1 to 14 (MATSDSRSSPSSSD) the composition is skewed to low complexity. 2 disordered regions span residues 1-173 (MATS…DDAS) and 463-486 (PIDR…DISV). Residues 21-55 (NPSSDPETNSERVQSQLESMNLSQPSEVSDGSHTE) show a composition bias toward polar residues.

The protein belongs to the MON1/SAND family. As to quaternary structure, interacts with CCZ1A, CCZ1B and RABF2B. Widely expressed at stable levels.

The protein localises to the endosome. It is found in the prevacuolar compartment. Functionally, plays an important role in membrane trafficking through the secretory apparatus. In complex with CCZ1, acts as a guanine exchange factor (GEF) for RABG3F of the Rab7 protein family. Promotes the exchange of GDP to GTP, converting RABG3F from an inactive GDP-bound form into an active GTP-bound form. The RABG3F active form is involved in protein trafficking from prevacuolar compartments (PVCs) to vacuoles. May serve as a linker between Rab5 and Rab7 protein families in PVCs and mediate PVC maturation. This chain is Vacuolar fusion protein MON1 homolog, found in Arabidopsis thaliana (Mouse-ear cress).